The following is a 121-amino-acid chain: MAYNRKETGEFGEKLAAEYLKGMGYSIIQTNCRLPEGEIDIVGQDGEYLVFIEVRTKRRLGYGLPAESVTPRKKAHLMASAESYIQKHRLEHFPCRIDFVSVDLSQPEPRLELIKNALGEE.

The protein belongs to the UPF0102 family.

This is UPF0102 protein DehaBAV1_0707 from Dehalococcoides mccartyi (strain ATCC BAA-2100 / JCM 16839 / KCTC 5957 / BAV1).